The primary structure comprises 293 residues: Movement protein BC1 (293 aa).

It belongs to the begomovirus movement protein BC1 family. Binds to dimeric supercoiled plasmid DNA. Post-translationally, phosphorylated.

The protein resides in the host cell membrane. It is found in the host microsome membrane. Its subcellular location is the host endoplasmic reticulum membrane. Its function is as follows. Transports viral genome to neighboring plant cells directly through plasmosdesmata, without any budding. The movement protein allows efficient cell to cell propagation, by bypassing the host cell wall barrier. Begomovirus genome is shuttled out of nucleus by Nuclear shuttle protein (NSP) and the movement protein transports the DNA-NSP complex to cell plasmodesmata and facilitates further movement across the cell wall. This Macroptilium lathyroides (Lima bean) protein is Movement protein BC1.